The primary structure comprises 119 residues: Host cell factor C1 regulator 1 (119 aa).

The segment at 1–34 (MILQQPLERGPQGRAQRDPRAASGASGGLDAREP) is disordered. The segment at 57 to 60 (DHPY) is interaction with HCFC1. Positions 91–100 (IPEALRLLRL) match the Nuclear export signal motif.

As to quaternary structure, interacts with HCFC1.

Its subcellular location is the cytoplasm. The protein resides in the nucleus. In terms of biological role, regulates HCFC1 activity by modulating its subcellular localization. Overexpression of HCFC1R1 leads to accumulation of HCFC1 in the cytoplasm. HCFC1R1-mediated export may provide the pool of cytoplasmic HCFC1 required for import of virion-derived VP16 into the nucleus. This is Host cell factor C1 regulator 1 (HCFC1R1) from Bos taurus (Bovine).